Here is a 279-residue protein sequence, read N- to C-terminus: Plasmodesmata-located protein 8 (279 aa).

An N-terminal signal peptide occupies residues 1–20 (MRRLFLFSLLFLFFYSSSSS). At 21-253 (RSSSESHIFI…PTNGDHVGKS (233 aa)) the chain is on the extracellular side. 2 Gnk2-homologous domains span residues 27-135 (HIFI…TNDF) and 137-237 (GKPD…GSGY). 6 cysteine pairs are disulfide-bonded: cysteine 34–cysteine 113, cysteine 89–cysteine 98, cysteine 101–cysteine 126, cysteine 148–cysteine 215, cysteine 191–cysteine 200, and cysteine 203–cysteine 228. Residues 254-274 (IAIIVGVIAGFAILVVLLSLC) traverse the membrane as a helical segment. The necessary and sufficient for plasmodesmal targeting stretch occupies residues 254–274 (IAIIVGVIAGFAILVVLLSLC). The Cytoplasmic segment spans residues 275-279 (RNSMH).

The protein belongs to the cysteine-rich repeat secretory protein family. Plasmodesmata-located proteins (PDLD) subfamily. As to quaternary structure, interacts with ACBP6; interaction occurs at the plasma membrane. In terms of assembly, (Microbial infection) Interacts with Grapevine fanleaf virus (GFLV) 2B-MP. In terms of tissue distribution, highly expressed in pollen, lateral root and elongation zone. Higher expression in the reproductive tissues (flowers and buds) than in vegetative organs (leaves and stems). High expression in shoot and root phloem companion cells (at protein level).

The protein localises to the cell membrane. It localises to the cell junction. The protein resides in the plasmodesma. In terms of biological role, modulates cell-to-cell trafficking. The protein is Plasmodesmata-located protein 8 of Arabidopsis thaliana (Mouse-ear cress).